Consider the following 203-residue polypeptide: Glycerol-3-phosphate acyltransferase 1 (203 aa).

6 helical membrane-spanning segments follow: residues 2–22, 52–72, 82–102, 117–137, 150–168, and 170–190; these read LNFF…SHII, GFPA…FFVW, VIAF…FLKF, VLTK…FSIL, EDAF…YTMW, and VFNG…IVFY.

The protein belongs to the PlsY family. As to quaternary structure, probably interacts with PlsX.

It is found in the cell inner membrane. It carries out the reaction an acyl phosphate + sn-glycerol 3-phosphate = a 1-acyl-sn-glycero-3-phosphate + phosphate. It functions in the pathway lipid metabolism; phospholipid metabolism. Functionally, catalyzes the transfer of an acyl group from acyl-phosphate (acyl-PO(4)) to glycerol-3-phosphate (G3P) to form lysophosphatidic acid (LPA). This enzyme utilizes acyl-phosphate as fatty acyl donor, but not acyl-CoA or acyl-ACP. The sequence is that of Glycerol-3-phosphate acyltransferase 1 from Thermotoga maritima (strain ATCC 43589 / DSM 3109 / JCM 10099 / NBRC 100826 / MSB8).